The chain runs to 156 residues: Ribosomal RNA large subunit methyltransferase H (156 aa).

S-adenosyl-L-methionine is bound by residues Leu-73, Gly-104, and 123–128 (LSALTL).

Belongs to the RNA methyltransferase RlmH family. In terms of assembly, homodimer.

It localises to the cytoplasm. It catalyses the reaction pseudouridine(1915) in 23S rRNA + S-adenosyl-L-methionine = N(3)-methylpseudouridine(1915) in 23S rRNA + S-adenosyl-L-homocysteine + H(+). Functionally, specifically methylates the pseudouridine at position 1915 (m3Psi1915) in 23S rRNA. The sequence is that of Ribosomal RNA large subunit methyltransferase H from Shewanella baltica (strain OS223).